Reading from the N-terminus, the 20-residue chain is Lysozyme (20 aa).

Monomer.

It is found in the secreted. It carries out the reaction Hydrolysis of (1-&gt;4)-beta-linkages between N-acetylmuramic acid and N-acetyl-D-glucosamine residues in a peptidoglycan and between N-acetyl-D-glucosamine residues in chitodextrins.. Its function is as follows. Has bacteriolytic activity. The polypeptide is Lysozyme (Lysobacter sp. (strain XL1)).